A 615-amino-acid polypeptide reads, in one-letter code: Chaperone protein DnaK (615 aa).

At Thr195 the chain carries Phosphothreonine; by autocatalysis. The disordered stretch occupies residues 592 to 615 (EKGAQAASGKGPDDVIDADYKPAD).

This sequence belongs to the heat shock protein 70 family.

In terms of biological role, acts as a chaperone. This chain is Chaperone protein DnaK, found in Thermus thermophilus (strain ATCC BAA-163 / DSM 7039 / HB27).